The sequence spans 315 residues: tRNA-cytidine(32) 2-sulfurtransferase (315 aa).

The short motif at S54–S59 is the PP-loop motif element. [4Fe-4S] cluster is bound by residues C129, C132, and C220.

Belongs to the TtcA family. In terms of assembly, homodimer. Mg(2+) serves as cofactor. [4Fe-4S] cluster is required as a cofactor.

It localises to the cytoplasm. The enzyme catalyses cytidine(32) in tRNA + S-sulfanyl-L-cysteinyl-[cysteine desulfurase] + AH2 + ATP = 2-thiocytidine(32) in tRNA + L-cysteinyl-[cysteine desulfurase] + A + AMP + diphosphate + H(+). It participates in tRNA modification. Its function is as follows. Catalyzes the ATP-dependent 2-thiolation of cytidine in position 32 of tRNA, to form 2-thiocytidine (s(2)C32). The sulfur atoms are provided by the cysteine/cysteine desulfurase (IscS) system. This is tRNA-cytidine(32) 2-sulfurtransferase from Bordetella avium (strain 197N).